Here is a 436-residue protein sequence, read N- to C-terminus: MKFLDIRDTNFDMEFAAILARGEETGREVEQVVLDIIADVRARGDEALLEYTRRFDRLEADSVASLQVTEDEVDYAFARVKDEEIAALKLAVERVARFHEKQKQETWLSTGEPDILLGQMVTPLERVGIYVPGGKASYPSSVIMNAVPARVAGVGEVVMVAPTPGGEINPHVLVAARFSGVDRIFRLGGAQAVAALAYGTATVPKVDKITGPGNIYVATAKKLVFGQVGIDMIAGPSEILVINDGSGTPAHIAADLLSQAEHDELASSILITTDRGFGERVAAEVERQLAELSRETIARRSWETYGAVIVAGSLDEAIAFSNRIAPEHLELAVTNPFDVLPKIRNAGAIFLGHFTPEAAGDYLAGPNHTLPTGGTARFFSPLSVDDFVKKSSIVYFSESGLNRLGGGIVRIAELEGLEAHGRSVSVRLKGEGEARK.

NAD(+)-binding residues include Tyr130, Gln191, and Asn214. Residues Ser237, Gln259, and His262 each coordinate substrate. Gln259 and His262 together coordinate Zn(2+). Active-site proton acceptor residues include Glu327 and His328. His328, Asp361, Glu415, and His420 together coordinate substrate. Asp361 contacts Zn(2+). His420 lines the Zn(2+) pocket.

Belongs to the histidinol dehydrogenase family. Zn(2+) serves as cofactor.

It carries out the reaction L-histidinol + 2 NAD(+) + H2O = L-histidine + 2 NADH + 3 H(+). The protein operates within amino-acid biosynthesis; L-histidine biosynthesis; L-histidine from 5-phospho-alpha-D-ribose 1-diphosphate: step 9/9. Its function is as follows. Catalyzes the sequential NAD-dependent oxidations of L-histidinol to L-histidinaldehyde and then to L-histidine. In Geobacter metallireducens (strain ATCC 53774 / DSM 7210 / GS-15), this protein is Histidinol dehydrogenase.